Consider the following 316-residue polypeptide: tRNA dimethylallyltransferase (316 aa).

13-20 (GPTASGKT) lines the ATP pocket. 15-20 (TASGKT) serves as a coordination point for substrate. Interaction with substrate tRNA regions lie at residues 38 to 41 (DSAL), 162 to 166 (QRINR), 243 to 248 (RCVGYR), and 276 to 283 (KRQITWLR).

The protein belongs to the IPP transferase family. As to quaternary structure, monomer. It depends on Mg(2+) as a cofactor.

The catalysed reaction is adenosine(37) in tRNA + dimethylallyl diphosphate = N(6)-dimethylallyladenosine(37) in tRNA + diphosphate. Functionally, catalyzes the transfer of a dimethylallyl group onto the adenine at position 37 in tRNAs that read codons beginning with uridine, leading to the formation of N6-(dimethylallyl)adenosine (i(6)A). This chain is tRNA dimethylallyltransferase, found in Pasteurella multocida (strain Pm70).